We begin with the raw amino-acid sequence, 222 residues long: UPF0758 protein YE0063 (222 aa).

Residues 100–222 enclose the MPN domain; it reads VLQNPEITQK…CVSFAERGWL (123 aa). Zn(2+) is bound by residues H171, H173, and D184. A JAMM motif motif is present at residues 171 to 184; that stretch reads HNHPSGKAEPSQAD.

This sequence belongs to the UPF0758 family. YicR subfamily.

The sequence is that of UPF0758 protein YE0063 from Yersinia enterocolitica serotype O:8 / biotype 1B (strain NCTC 13174 / 8081).